Here is a 134-residue protein sequence, read N- to C-terminus: uncharacterized protein (134 aa).

This is an uncharacterized protein from Methanocaldococcus jannaschii (strain ATCC 43067 / DSM 2661 / JAL-1 / JCM 10045 / NBRC 100440) (Methanococcus jannaschii).